The following is a 387-amino-acid chain: Phosphoglycerate kinase (387 aa).

Residues 21–23, Arg36, 59–62, Arg113, and Arg146 each bind substrate; these read DLN and HLGR. ATP is bound by residues Lys197, Glu314, and 340–343; that span reads GGDT.

This sequence belongs to the phosphoglycerate kinase family. Monomer.

The protein localises to the cytoplasm. The enzyme catalyses (2R)-3-phosphoglycerate + ATP = (2R)-3-phospho-glyceroyl phosphate + ADP. The protein operates within carbohydrate degradation; glycolysis; pyruvate from D-glyceraldehyde 3-phosphate: step 2/5. This Pseudomonas fluorescens (strain SBW25) protein is Phosphoglycerate kinase.